Reading from the N-terminus, the 451-residue chain is Eukaryotic translation initiation factor 3 subunit E (451 aa).

In terms of domain architecture, PCI spans 256–425 (TDLFFSPAYI…GTVIMNHPPQ (170 aa)).

Belongs to the eIF-3 subunit E family. Component of the eukaryotic translation initiation factor 3 (eIF-3) complex.

The protein localises to the cytoplasm. Functionally, component of the eukaryotic translation initiation factor 3 (eIF-3) complex, which is involved in protein synthesis of a specialized repertoire of mRNAs and, together with other initiation factors, stimulates binding of mRNA and methionyl-tRNAi to the 40S ribosome. The eIF-3 complex specifically targets and initiates translation of a subset of mRNAs involved in cell proliferation. The protein is Eukaryotic translation initiation factor 3 subunit E (int6) of Aspergillus fumigatus (strain CBS 144.89 / FGSC A1163 / CEA10) (Neosartorya fumigata).